Consider the following 156-residue polypeptide: ATP synthase subunit b (156 aa).

A helical membrane pass occupies residues 7 to 27 (LIGQTVAFIIFVWFCMKFVWP).

This sequence belongs to the ATPase B chain family. As to quaternary structure, F-type ATPases have 2 components, F(1) - the catalytic core - and F(0) - the membrane proton channel. F(1) has five subunits: alpha(3), beta(3), gamma(1), delta(1), epsilon(1). F(0) has three main subunits: a(1), b(2) and c(10-14). The alpha and beta chains form an alternating ring which encloses part of the gamma chain. F(1) is attached to F(0) by a central stalk formed by the gamma and epsilon chains, while a peripheral stalk is formed by the delta and b chains.

The protein localises to the cell inner membrane. In terms of biological role, f(1)F(0) ATP synthase produces ATP from ADP in the presence of a proton or sodium gradient. F-type ATPases consist of two structural domains, F(1) containing the extramembraneous catalytic core and F(0) containing the membrane proton channel, linked together by a central stalk and a peripheral stalk. During catalysis, ATP synthesis in the catalytic domain of F(1) is coupled via a rotary mechanism of the central stalk subunits to proton translocation. Functionally, component of the F(0) channel, it forms part of the peripheral stalk, linking F(1) to F(0). This is ATP synthase subunit b from Shewanella baltica (strain OS155 / ATCC BAA-1091).